Here is a 348-residue protein sequence, read N- to C-terminus: Dihydroorotase (348 aa).

Residues histidine 17 and histidine 19 each contribute to the Zn(2+) site. Residues 19–21 (HLR) and asparagine 45 each bind substrate. Lysine 103, histidine 140, and histidine 178 together coordinate Zn(2+). Position 103 is an N6-carboxylysine (lysine 103). A substrate-binding site is contributed by histidine 140. A substrate-binding site is contributed by leucine 223. Aspartate 251 is a binding site for Zn(2+). Residue aspartate 251 is part of the active site. Positions 255 and 267 each coordinate substrate.

This sequence belongs to the metallo-dependent hydrolases superfamily. DHOase family. Class II DHOase subfamily. As to quaternary structure, homodimer. Zn(2+) is required as a cofactor.

It carries out the reaction (S)-dihydroorotate + H2O = N-carbamoyl-L-aspartate + H(+). Its pathway is pyrimidine metabolism; UMP biosynthesis via de novo pathway; (S)-dihydroorotate from bicarbonate: step 3/3. In terms of biological role, catalyzes the reversible cyclization of carbamoyl aspartate to dihydroorotate. This is Dihydroorotase from Cronobacter sakazakii (strain ATCC BAA-894) (Enterobacter sakazakii).